Reading from the N-terminus, the 53-residue chain is Large ribosomal subunit protein eL40 (53 aa).

It belongs to the eukaryotic ribosomal protein eL40 family.

The protein is Large ribosomal subunit protein eL40 of Pyrobaculum islandicum (strain DSM 4184 / JCM 9189 / GEO3).